The following is a 310-amino-acid chain: Cytochrome f (310 aa).

Residues 1–27 (MRRHLSLFLGSLVIGLALLIAPAASWA) form the signal peptide. The heme site is built by Tyr28, Cys48, Cys51, and His52. Residues 277–297 (IYGLLAFFAAVALAQIMLVLK) form a helical membrane-spanning segment.

This sequence belongs to the cytochrome f family. The 4 large subunits of the cytochrome b6-f complex are cytochrome b6, subunit IV (17 kDa polypeptide, PetD), cytochrome f and the Rieske protein, while the 4 small subunits are PetG, PetL, PetM and PetN. The complex functions as a dimer. Heme serves as cofactor.

The protein localises to the cellular thylakoid membrane. Its function is as follows. Component of the cytochrome b6-f complex, which mediates electron transfer between photosystem II (PSII) and photosystem I (PSI), cyclic electron flow around PSI, and state transitions. This is Cytochrome f from Synechococcus sp. (strain CC9605).